An 84-amino-acid chain; its full sequence is Envelope small membrane protein (84 aa).

Topologically, residues 1-18 (MFMADAYLADTVWYVGQI) are virion surface. A helical membrane pass occupies residues 19–39 (IFIVAICLLVTIVVVAFLATF). Over 40–80 (KLCIQLCGMCNTLVLSPSIYVFNRGRQFYEFYNDVKPPVLD) the chain is Intravirion.

This sequence belongs to the betacoronaviruses E protein family. In terms of assembly, homopentamer. Interacts with membrane protein M in the budding compartment of the host cell, which is located between endoplasmic reticulum and the Golgi complex. Interacts with Nucleoprotein.

It is found in the host Golgi apparatus membrane. In terms of biological role, plays a central role in virus morphogenesis and assembly. Acts as a viroporin and self-assembles in host membranes forming pentameric protein-lipid pores that allow ion transport. Also plays a role in the induction of apoptosis. The sequence is that of Envelope small membrane protein from Human coronavirus OC43 (HCoV-OC43).